A 155-amino-acid chain; its full sequence is MKIELDSFSGNKIYPGRGTLFVRGDSKIFRFYSSKTASLFKQRKNPRRIAWTVLYRRKHKKGITEEVSKKRSRKSVKAVRGIVGASLDVIKEKRNARPETRNATRAKHAEAAKERKEKEAERRKAAKAAHVAAGGPKVSKLGAKGSAPKVQATSR.

The segment covering 93–123 (KRNARPETRNATRAKHAEAAKERKEKEAERR) has biased composition (basic and acidic residues). Positions 93–155 (KRNARPETRN…SAPKVQATSR (63 aa)) are disordered.

This sequence belongs to the eukaryotic ribosomal protein eL24 family.

This is Large ribosomal subunit protein eL24 (RPL24) from Yarrowia lipolytica (strain CLIB 122 / E 150) (Yeast).